The chain runs to 435 residues: Glutamyl-tRNA reductase (435 aa).

Residues 49-52 (TCNR), Ser109, 114-116 (ETQ), and Gln120 each bind substrate. Catalysis depends on Cys50, which acts as the Nucleophile. 189–194 (GAGEMS) contacts NADP(+).

Belongs to the glutamyl-tRNA reductase family. As to quaternary structure, homodimer.

It catalyses the reaction (S)-4-amino-5-oxopentanoate + tRNA(Glu) + NADP(+) = L-glutamyl-tRNA(Glu) + NADPH + H(+). Its pathway is porphyrin-containing compound metabolism; protoporphyrin-IX biosynthesis; 5-aminolevulinate from L-glutamyl-tRNA(Glu): step 1/2. Catalyzes the NADPH-dependent reduction of glutamyl-tRNA(Glu) to glutamate 1-semialdehyde (GSA). The protein is Glutamyl-tRNA reductase of Listeria innocua serovar 6a (strain ATCC BAA-680 / CLIP 11262).